A 929-amino-acid polypeptide reads, in one-letter code: Isoleucine--tRNA ligase (929 aa).

The 'HIGH' region motif lies at P57–H67. Residue E554 participates in L-isoleucyl-5'-AMP binding. A 'KMSKS' region motif is present at residues K595–S599. K598 serves as a coordination point for ATP. C888, C891, C908, and C911 together coordinate Zn(2+).

It belongs to the class-I aminoacyl-tRNA synthetase family. IleS type 1 subfamily. Monomer. It depends on Zn(2+) as a cofactor.

The protein resides in the cytoplasm. It carries out the reaction tRNA(Ile) + L-isoleucine + ATP = L-isoleucyl-tRNA(Ile) + AMP + diphosphate. Functionally, catalyzes the attachment of isoleucine to tRNA(Ile). As IleRS can inadvertently accommodate and process structurally similar amino acids such as valine, to avoid such errors it has two additional distinct tRNA(Ile)-dependent editing activities. One activity is designated as 'pretransfer' editing and involves the hydrolysis of activated Val-AMP. The other activity is designated 'posttransfer' editing and involves deacylation of mischarged Val-tRNA(Ile). The polypeptide is Isoleucine--tRNA ligase (Streptococcus thermophilus (strain ATCC BAA-491 / LMD-9)).